A 368-amino-acid chain; its full sequence is Histidinol-phosphate aminotransferase (368 aa).

N6-(pyridoxal phosphate)lysine is present on lysine 224.

It belongs to the class-II pyridoxal-phosphate-dependent aminotransferase family. Histidinol-phosphate aminotransferase subfamily. As to quaternary structure, homodimer. Pyridoxal 5'-phosphate serves as cofactor.

The catalysed reaction is L-histidinol phosphate + 2-oxoglutarate = 3-(imidazol-4-yl)-2-oxopropyl phosphate + L-glutamate. It functions in the pathway amino-acid biosynthesis; L-histidine biosynthesis; L-histidine from 5-phospho-alpha-D-ribose 1-diphosphate: step 7/9. The protein is Histidinol-phosphate aminotransferase of Agrobacterium fabrum (strain C58 / ATCC 33970) (Agrobacterium tumefaciens (strain C58)).